An 827-amino-acid polypeptide reads, in one-letter code: 4-hydroxy-3-methylbut-2-enyl diphosphate reductase (827 aa).

The interval 1–284 is 4-hydroxy-3-methylbut-2-enyl diphosphate reductase; it reads MEIIRAKHMG…MNIEKKVRGI (284 aa). Cysteine 12 provides a ligand contact to [4Fe-4S] cluster. Residues histidine 40 and histidine 79 each contribute to the (2E)-4-hydroxy-3-methylbut-2-enyl diphosphate site. Residues histidine 40 and histidine 79 each contribute to the dimethylallyl diphosphate site. Isopentenyl diphosphate is bound by residues histidine 40 and histidine 79. Cysteine 101 is a [4Fe-4S] cluster binding site. Residue histidine 129 participates in (2E)-4-hydroxy-3-methylbut-2-enyl diphosphate binding. Histidine 129 lines the dimethylallyl diphosphate pocket. Position 129 (histidine 129) interacts with isopentenyl diphosphate. Glutamate 131 (proton donor) is an active-site residue. Residue threonine 168 participates in (2E)-4-hydroxy-3-methylbut-2-enyl diphosphate binding. Cysteine 196 contributes to the [4Fe-4S] cluster binding site. (2E)-4-hydroxy-3-methylbut-2-enyl diphosphate contacts are provided by serine 224, serine 225, asparagine 226, and serine 268. Dimethylallyl diphosphate contacts are provided by serine 224, serine 225, asparagine 226, and serine 268. The isopentenyl diphosphate site is built by serine 224, serine 225, asparagine 226, and serine 268. S1 motif domains are found at residues 477 to 545, 562 to 632, 649 to 716, and 733 to 802; these read GQIV…LSIK, DDEI…LGIK, DTVI…GSLK, and GTTV…LSIK.

It in the N-terminal section; belongs to the IspH family. Requires [4Fe-4S] cluster as cofactor.

The enzyme catalyses isopentenyl diphosphate + 2 oxidized [2Fe-2S]-[ferredoxin] + H2O = (2E)-4-hydroxy-3-methylbut-2-enyl diphosphate + 2 reduced [2Fe-2S]-[ferredoxin] + 2 H(+). It carries out the reaction dimethylallyl diphosphate + 2 oxidized [2Fe-2S]-[ferredoxin] + H2O = (2E)-4-hydroxy-3-methylbut-2-enyl diphosphate + 2 reduced [2Fe-2S]-[ferredoxin] + 2 H(+). It participates in isoprenoid biosynthesis; dimethylallyl diphosphate biosynthesis; dimethylallyl diphosphate from (2E)-4-hydroxy-3-methylbutenyl diphosphate: step 1/1. The protein operates within isoprenoid biosynthesis; isopentenyl diphosphate biosynthesis via DXP pathway; isopentenyl diphosphate from 1-deoxy-D-xylulose 5-phosphate: step 6/6. Its function is as follows. Catalyzes the conversion of 1-hydroxy-2-methyl-2-(E)-butenyl 4-diphosphate (HMBPP) into a mixture of isopentenyl diphosphate (IPP) and dimethylallyl diphosphate (DMAPP). Acts in the terminal step of the DOXP/MEP pathway for isoprenoid precursor biosynthesis. In Fusobacterium nucleatum subsp. nucleatum (strain ATCC 25586 / DSM 15643 / BCRC 10681 / CIP 101130 / JCM 8532 / KCTC 2640 / LMG 13131 / VPI 4355), this protein is 4-hydroxy-3-methylbut-2-enyl diphosphate reductase.